We begin with the raw amino-acid sequence, 667 residues long: DNA ligase (667 aa).

Residues 32-36 (DSEYD), 81-82 (SL), and glutamate 110 each bind NAD(+). Residue lysine 112 is the N6-AMP-lysine intermediate of the active site. 4 residues coordinate NAD(+): arginine 133, glutamate 167, lysine 283, and lysine 307. The Zn(2+) site is built by cysteine 401, cysteine 404, cysteine 419, and cysteine 424. In terms of domain architecture, BRCT spans 586–667 (EGHPEFSGKT…FVDKQNELNS (82 aa)).

The protein belongs to the NAD-dependent DNA ligase family. LigA subfamily. Mg(2+) is required as a cofactor. It depends on Mn(2+) as a cofactor.

The enzyme catalyses NAD(+) + (deoxyribonucleotide)n-3'-hydroxyl + 5'-phospho-(deoxyribonucleotide)m = (deoxyribonucleotide)n+m + AMP + beta-nicotinamide D-nucleotide.. DNA ligase that catalyzes the formation of phosphodiester linkages between 5'-phosphoryl and 3'-hydroxyl groups in double-stranded DNA using NAD as a coenzyme and as the energy source for the reaction. It is essential for DNA replication and repair of damaged DNA. This Staphylococcus aureus (strain USA300) protein is DNA ligase.